Here is a 193-residue protein sequence, read N- to C-terminus: Peptidyl-tRNA hydrolase (193 aa).

Position 21 (tyrosine 21) interacts with tRNA. The Proton acceptor role is filled by histidine 26. Residues tyrosine 72, asparagine 74, and asparagine 120 each contribute to the tRNA site.

The protein belongs to the PTH family. In terms of assembly, monomer.

It localises to the cytoplasm. It carries out the reaction an N-acyl-L-alpha-aminoacyl-tRNA + H2O = an N-acyl-L-amino acid + a tRNA + H(+). In terms of biological role, hydrolyzes ribosome-free peptidyl-tRNAs (with 1 or more amino acids incorporated), which drop off the ribosome during protein synthesis, or as a result of ribosome stalling. Functionally, catalyzes the release of premature peptidyl moieties from peptidyl-tRNA molecules trapped in stalled 50S ribosomal subunits, and thus maintains levels of free tRNAs and 50S ribosomes. This Nocardia farcinica (strain IFM 10152) protein is Peptidyl-tRNA hydrolase.